Consider the following 30-residue polypeptide: Cycloviolin-C (30 aa).

A cross-link (cyclopeptide (Gly-Asn)) is located at residues 1–30; that stretch reads GIPCGESCVFIPCLTTVAGCSCKNKVCYRN. 3 disulfides stabilise this stretch: cysteine 4/cysteine 20, cysteine 8/cysteine 22, and cysteine 13/cysteine 27.

Post-translationally, this is a cyclic peptide.

In terms of biological role, probably participates in a plant defense mechanism. Has anti-HIV activity. The polypeptide is Cycloviolin-C (Leonia cymosa (Sacha uba)).